The chain runs to 363 residues: 3-isopropylmalate dehydrogenase (363 aa).

NAD(+) is bound at residue 78–91 (GPKWEHLPPDQQPE). Substrate-binding residues include Arg99, Arg109, Arg138, and Asp227. The Mg(2+) site is built by Asp227, Asp251, and Asp255. NAD(+) is bound at residue 285–297 (GSAPDIAGKNIAN).

This sequence belongs to the isocitrate and isopropylmalate dehydrogenases family. LeuB type 1 subfamily. As to quaternary structure, homodimer. It depends on Mg(2+) as a cofactor. Mn(2+) is required as a cofactor.

The protein localises to the cytoplasm. The enzyme catalyses (2R,3S)-3-isopropylmalate + NAD(+) = 4-methyl-2-oxopentanoate + CO2 + NADH. The protein operates within amino-acid biosynthesis; L-leucine biosynthesis; L-leucine from 3-methyl-2-oxobutanoate: step 3/4. Its function is as follows. Catalyzes the oxidation of 3-carboxy-2-hydroxy-4-methylpentanoate (3-isopropylmalate) to 3-carboxy-4-methyl-2-oxopentanoate. The product decarboxylates to 4-methyl-2 oxopentanoate. The chain is 3-isopropylmalate dehydrogenase from Shigella flexneri.